Here is a 365-residue protein sequence, read N- to C-terminus: Peptide chain release factor 2 (365 aa).

Gln-252 is modified (N5-methylglutamine).

This sequence belongs to the prokaryotic/mitochondrial release factor family. In terms of processing, methylated by PrmC. Methylation increases the termination efficiency of RF2.

It is found in the cytoplasm. Its function is as follows. Peptide chain release factor 2 directs the termination of translation in response to the peptide chain termination codons UGA and UAA. This chain is Peptide chain release factor 2, found in Pectobacterium atrosepticum (strain SCRI 1043 / ATCC BAA-672) (Erwinia carotovora subsp. atroseptica).